A 419-amino-acid polypeptide reads, in one-letter code: UDP-N-acetylglucosamine 1-carboxyvinyltransferase (419 aa).

A phosphoenolpyruvate-binding site is contributed by 22–23; it reads KN. R93 is a UDP-N-acetyl-alpha-D-glucosamine binding site. Residue C117 is the Proton donor of the active site. A 2-(S-cysteinyl)pyruvic acid O-phosphothioketal modification is found at C117. UDP-N-acetyl-alpha-D-glucosamine is bound by residues D307 and I329.

The protein belongs to the EPSP synthase family. MurA subfamily.

Its subcellular location is the cytoplasm. It carries out the reaction phosphoenolpyruvate + UDP-N-acetyl-alpha-D-glucosamine = UDP-N-acetyl-3-O-(1-carboxyvinyl)-alpha-D-glucosamine + phosphate. It participates in cell wall biogenesis; peptidoglycan biosynthesis. Cell wall formation. Adds enolpyruvyl to UDP-N-acetylglucosamine. This Shewanella denitrificans (strain OS217 / ATCC BAA-1090 / DSM 15013) protein is UDP-N-acetylglucosamine 1-carboxyvinyltransferase.